The sequence spans 445 residues: Nuclear envelope integral membrane protein 1 (445 aa).

A signal peptide spans 1–44 (MAGGMKVAVLPAVGAGPWSWGAGGCGAVRLLLVLFGCFVCGSAG). N125 carries an N-linked (GlcNAc...) asparagine glycan. The next 5 helical transmembrane spans lie at 161–181 (PKLF…DLLS), 186–206 (FYYS…IIFI), 216–236 (PIYI…QLVF), 245–265 (CYWQ…FAVC), and 289–309 (LCFM…VVIA). Positions 186-297 (FYYSTGMSVG…GLCFMYSSIQ (112 aa)) are a; required for its colocalization with lamins at the nuclear envelope. The segment at 336-405 (TVPPRLLTEE…LTPNEVSVHE (70 aa)) is b; required for interaction with RAN-GTP. A required for nuclear localization region spans residues 336–445 (TVPPRLLTEE…LVVQQNSFLT (110 aa)). A phosphoserine mark is found at S368, S424, and S425. Acidic residues predominate over residues 418–430 (ELSEETSSEEEDS). The segment at 418 to 445 (ELSEETSSEEEDSDSRYPLVVQQNSFLT) is disordered.

It belongs to the NEMP family. Homooligomer. Interacts with RAN-GTP. Interacts with EMD. Post-translationally, phosphorylation may regulate its interaction with RAN-GTP.

It localises to the nucleus inner membrane. The protein localises to the nucleus envelope. Its function is as follows. Together with EMD, contributes to nuclear envelope stiffness in germ cells. Required for female fertility. Essential for normal erythropoiesis. Required for efficient nuclear envelope opening and enucleation during the late stages of erythroblast maturation. The chain is Nuclear envelope integral membrane protein 1 (NEMP1) from Bos taurus (Bovine).